The primary structure comprises 428 residues: Aspartate--tRNA(Asp) ligase (428 aa).

Glu166 contributes to the L-aspartate binding site. Residues 188-191 are aspartate; that stretch reads QLYK. Arg210 provides a ligand contact to L-aspartate. Residues 210-212, 218-220, and Glu351 each bind ATP; these read RAE and RHL. Residues Glu351 and Ser354 each contribute to the Mg(2+) site. The L-aspartate site is built by Ser354 and Arg358. 399 to 402 is an ATP binding site; it reads GLER.

It belongs to the class-II aminoacyl-tRNA synthetase family. Type 2 subfamily. As to quaternary structure, homodimer. Mg(2+) serves as cofactor.

It is found in the cytoplasm. It catalyses the reaction tRNA(Asp) + L-aspartate + ATP = L-aspartyl-tRNA(Asp) + AMP + diphosphate. Catalyzes the attachment of L-aspartate to tRNA(Asp) in a two-step reaction: L-aspartate is first activated by ATP to form Asp-AMP and then transferred to the acceptor end of tRNA(Asp). The sequence is that of Aspartate--tRNA(Asp) ligase from Thermoplasma volcanium (strain ATCC 51530 / DSM 4299 / JCM 9571 / NBRC 15438 / GSS1).